The following is a 448-amino-acid chain: Solute carrier family 52, riboflavin transporter, member 3-A (448 aa).

The next 3 helical transmembrane spans lie at 11-31, 40-60, and 73-93; these read AFGLGSWVSINGLWVELPLIV, LPSYLTVIIQFANLGPLLVTL, and LAIYAVLSIGVVACILLAVFW. An N-linked (GlcNAc...) asparagine glycan is attached at asparagine 94. Transmembrane regions (helical) follow at residues 107-127 and 138-158; these read AFFILTFFLALVDCTSSVTFL and ITTYFIGEGLSGLVPGLVALA. N-linked (GlcNAc...) asparagine glycosylation is found at asparagine 168, asparagine 171, asparagine 175, and asparagine 194. Transmembrane regions (helical) follow at residues 198 to 218, 280 to 300, 315 to 335, 339 to 359, 376 to 396, and 407 to 427; these read EIFFSFLAVMTTISLGAFLIL, AFIYVMVLWVNSATNGLLPSV, LSAALSAVANPVACIIAMFFP, LVFLGILCLLGSTFGGYNMAM, AIIVLSWVFFTGLLSYVKVMV, and ALVWCGAAVQTGSLLGSIIMF.

Belongs to the riboflavin transporter family.

Its subcellular location is the cell membrane. It carries out the reaction riboflavin(in) = riboflavin(out). Its function is as follows. Plasma membrane transporter mediating the uptake by cells of the water soluble vitamin B2/riboflavin that plays a key role in biochemical oxidation-reduction reactions of the carbohydrate, lipid, and amino acid metabolism. The protein is Solute carrier family 52, riboflavin transporter, member 3-A (slc52a3a) of Danio rerio (Zebrafish).